A 457-amino-acid chain; its full sequence is Adenylosuccinate synthetase (457 aa).

Residues glycine 45–lysine 51 and glycine 73–threonine 75 contribute to the GTP site. Catalysis depends on aspartate 46, which acts as the Proton acceptor. Aspartate 46 and glycine 73 together coordinate Mg(2+). IMP is bound by residues aspartate 46–lysine 49, asparagine 71–histidine 74, threonine 163, arginine 177, asparagine 255, threonine 270, and arginine 334. Residue histidine 74 is the Proton donor of the active site. Valine 330–arginine 336 lines the substrate pocket. GTP-binding positions include arginine 336, lysine 362–aspartate 364, and glycine 444–glycine 446.

It belongs to the adenylosuccinate synthetase family. As to quaternary structure, homodimer. Mg(2+) is required as a cofactor.

It is found in the cytoplasm. It carries out the reaction IMP + L-aspartate + GTP = N(6)-(1,2-dicarboxyethyl)-AMP + GDP + phosphate + 2 H(+). It participates in purine metabolism; AMP biosynthesis via de novo pathway; AMP from IMP: step 1/2. Its function is as follows. Plays an important role in the de novo pathway and in the salvage pathway of purine nucleotide biosynthesis. Catalyzes the first committed step in the biosynthesis of AMP from IMP. The polypeptide is Adenylosuccinate synthetase (Aedes aegypti (Yellowfever mosquito)).